Reading from the N-terminus, the 428-residue chain is Enolase (428 aa).

Q162 contributes to the (2R)-2-phosphoglycerate binding site. The active-site Proton donor is the E204. Mg(2+)-binding residues include D241, E283, and D310. Residues K335, R364, S365, and K386 each coordinate (2R)-2-phosphoglycerate. The active-site Proton acceptor is K335.

Belongs to the enolase family. Requires Mg(2+) as cofactor.

It is found in the cytoplasm. Its subcellular location is the secreted. It localises to the cell surface. It carries out the reaction (2R)-2-phosphoglycerate = phosphoenolpyruvate + H2O. It participates in carbohydrate degradation; glycolysis; pyruvate from D-glyceraldehyde 3-phosphate: step 4/5. Functionally, catalyzes the reversible conversion of 2-phosphoglycerate (2-PG) into phosphoenolpyruvate (PEP). It is essential for the degradation of carbohydrates via glycolysis. This Rhodococcus erythropolis (strain PR4 / NBRC 100887) protein is Enolase.